A 419-amino-acid polypeptide reads, in one-letter code: Serine hydroxymethyltransferase (419 aa).

(6S)-5,6,7,8-tetrahydrofolate-binding positions include L122 and 126–128; that span reads GHL. Residue K231 is modified to N6-(pyridoxal phosphate)lysine. Position 354–356 (354–356) interacts with (6S)-5,6,7,8-tetrahydrofolate; it reads SPF.

This sequence belongs to the SHMT family. In terms of assembly, homodimer. Pyridoxal 5'-phosphate serves as cofactor.

The protein resides in the cytoplasm. It catalyses the reaction (6R)-5,10-methylene-5,6,7,8-tetrahydrofolate + glycine + H2O = (6S)-5,6,7,8-tetrahydrofolate + L-serine. It functions in the pathway one-carbon metabolism; tetrahydrofolate interconversion. It participates in amino-acid biosynthesis; glycine biosynthesis; glycine from L-serine: step 1/1. Functionally, catalyzes the reversible interconversion of serine and glycine with tetrahydrofolate (THF) serving as the one-carbon carrier. This reaction serves as the major source of one-carbon groups required for the biosynthesis of purines, thymidylate, methionine, and other important biomolecules. Also exhibits THF-independent aldolase activity toward beta-hydroxyamino acids, producing glycine and aldehydes, via a retro-aldol mechanism. The polypeptide is Serine hydroxymethyltransferase (Exiguobacterium sibiricum (strain DSM 17290 / CCUG 55495 / CIP 109462 / JCM 13490 / 255-15)).